Consider the following 243-residue polypeptide: UPF0758 protein MAE_44350 (243 aa).

One can recognise an MPN domain in the interval 113–235 (VIDSPDTAAA…FQSLRQITDL (123 aa)). Zn(2+) is bound by residues His184, His186, and Asp197. The JAMM motif motif lies at 184–197 (HNHPTGSLVPSQDD).

It belongs to the UPF0758 family.

This Microcystis aeruginosa (strain NIES-843 / IAM M-2473) protein is UPF0758 protein MAE_44350.